A 554-amino-acid polypeptide reads, in one-letter code: Probable urocanate hydratase (554 aa).

Residues 49–50 (GG), Q127, E194, 240–241 (NA), 261–265 (QTAAH), 271–272 (YI), and Y320 each bind NAD(+). The active site involves C408. G490 contacts NAD(+).

The protein belongs to the urocanase family. NAD(+) serves as cofactor.

The protein localises to the cytoplasm. It catalyses the reaction 4-imidazolone-5-propanoate = trans-urocanate + H2O. Its pathway is amino-acid degradation; L-histidine degradation into L-glutamate; N-formimidoyl-L-glutamate from L-histidine: step 2/3. Its function is as follows. Catalyzes the conversion of urocanate to 4-imidazolone-5-propionate. The polypeptide is Probable urocanate hydratase (Thermoplasma acidophilum (strain ATCC 25905 / DSM 1728 / JCM 9062 / NBRC 15155 / AMRC-C165)).